The chain runs to 99 residues: Integration host factor subunit alpha (99 aa).

This sequence belongs to the bacterial histone-like protein family. As to quaternary structure, heterodimer of an alpha and a beta chain.

Functionally, this protein is one of the two subunits of integration host factor, a specific DNA-binding protein that functions in genetic recombination as well as in transcriptional and translational control. The protein is Integration host factor subunit alpha of Nitrosococcus oceani (strain ATCC 19707 / BCRC 17464 / JCM 30415 / NCIMB 11848 / C-107).